The primary structure comprises 282 residues: Ammonia transport outward protein 2 (282 aa).

The interval 1–34 (MSDREQSSGNTAFENPKALDSSEGEFISENNDQS) is disordered. An N-acetylserine modification is found at serine 2. A phosphoserine mark is found at serine 2, serine 7, serine 21, serine 22, serine 28, and serine 40. Topologically, residues 2–86 (SDREQSSGNT…GLAPAPVHKF (85 aa)) are extracellular. The helical transmembrane segment at 87 to 107 (ANPAPLGLSGFALTTFVLSMF) threads the bilayer. The Cytoplasmic segment spans residues 108 to 119 (NARAQGITIPNV). The helical transmembrane segment at 120-140 (VVGCAMFYGGLVQLIAGIWEI) threads the bilayer. Residues 141-150 (ALENTFGGTA) lie on the Extracellular side of the membrane. The chain crosses the membrane as a helical span at residues 151 to 171 (LCSFGGFWLSFGAIYIPWFGI). The Cytoplasmic segment spans residues 172–184 (LDAYKDKESDLGN). The helical transmembrane segment at 185–205 (ALGFYLLGWALFTFGLSVCTM) threads the bilayer. Topologically, residues 206 to 207 (KS) are extracellular. Residues 208 to 228 (TIMFFALFFLLAVTFLLLSIA) form a helical membrane-spanning segment. Residues 229–238 (NFTGEVGVTR) are Cytoplasmic-facing. A helical membrane pass occupies residues 239 to 259 (AGGVLGVIVAFIAWYNAYAGI). At 260–282 (ATRQNSYIMVHPFALPSNDKVFF) the chain is on the extracellular side.

The protein belongs to the acetate uptake transporter (AceTr) (TC 2.A.96) family.

The protein resides in the cell membrane. Transporter protein required for ammonia export. Involved in acetate resistance. The polypeptide is Ammonia transport outward protein 2 (ATO2) (Saccharomyces cerevisiae (strain ATCC 204508 / S288c) (Baker's yeast)).